A 380-amino-acid chain; its full sequence is Chaperone protein DnaJ (380 aa).

The J domain occupies 4 to 69 (DYYEILGVTR…QKRAAYDRFG (66 aa)). The segment at 135–213 (GKTAQINIPS…CQGTRRVEKN (79 aa)) adopts a CR-type zinc-finger fold. Residues Cys-148, Cys-151, Cys-165, Cys-168, Cys-187, Cys-190, Cys-201, and Cys-204 each coordinate Zn(2+). 4 CXXCXGXG motif repeats span residues 148-155 (CDSCEGSG), 165-172 (CGTCHGAG), 187-194 (CHACNGRG), and 201-208 (CPKCQGTR).

Belongs to the DnaJ family. In terms of assembly, homodimer. Zn(2+) is required as a cofactor.

It localises to the cytoplasm. Participates actively in the response to hyperosmotic and heat shock by preventing the aggregation of stress-denatured proteins and by disaggregating proteins, also in an autonomous, DnaK-independent fashion. Unfolded proteins bind initially to DnaJ; upon interaction with the DnaJ-bound protein, DnaK hydrolyzes its bound ATP, resulting in the formation of a stable complex. GrpE releases ADP from DnaK; ATP binding to DnaK triggers the release of the substrate protein, thus completing the reaction cycle. Several rounds of ATP-dependent interactions between DnaJ, DnaK and GrpE are required for fully efficient folding. Also involved, together with DnaK and GrpE, in the DNA replication of plasmids through activation of initiation proteins. The polypeptide is Chaperone protein DnaJ (Bartonella quintana (strain Toulouse) (Rochalimaea quintana)).